Consider the following 485-residue polypeptide: N-succinylglutamate 5-semialdehyde dehydrogenase (485 aa).

220 to 225 (GSANTG) is a binding site for NAD(+). Active-site residues include glutamate 243 and cysteine 278.

This sequence belongs to the aldehyde dehydrogenase family. AstD subfamily.

It carries out the reaction N-succinyl-L-glutamate 5-semialdehyde + NAD(+) + H2O = N-succinyl-L-glutamate + NADH + 2 H(+). The protein operates within amino-acid degradation; L-arginine degradation via AST pathway; L-glutamate and succinate from L-arginine: step 4/5. In terms of biological role, catalyzes the NAD-dependent reduction of succinylglutamate semialdehyde into succinylglutamate. The chain is N-succinylglutamate 5-semialdehyde dehydrogenase from Aliivibrio salmonicida (strain LFI1238) (Vibrio salmonicida (strain LFI1238)).